The primary structure comprises 423 residues: Gamma-glutamyl phosphate reductase (423 aa).

The protein belongs to the gamma-glutamyl phosphate reductase family.

The protein resides in the cytoplasm. It carries out the reaction L-glutamate 5-semialdehyde + phosphate + NADP(+) = L-glutamyl 5-phosphate + NADPH + H(+). It functions in the pathway amino-acid biosynthesis; L-proline biosynthesis; L-glutamate 5-semialdehyde from L-glutamate: step 2/2. Its function is as follows. Catalyzes the NADPH-dependent reduction of L-glutamate 5-phosphate into L-glutamate 5-semialdehyde and phosphate. The product spontaneously undergoes cyclization to form 1-pyrroline-5-carboxylate. The polypeptide is Gamma-glutamyl phosphate reductase (Roseiflexus castenholzii (strain DSM 13941 / HLO8)).